The primary structure comprises 136 residues: Aspartate 1-decarboxylase (136 aa).

Serine 25 (schiff-base intermediate with substrate; via pyruvic acid) is an active-site residue. Serine 25 carries the pyruvic acid (Ser) modification. Threonine 57 is a binding site for substrate. The active-site Proton donor is tyrosine 58. 73-75 is a substrate binding site; sequence GAA.

It belongs to the PanD family. Heterooctamer of four alpha and four beta subunits. It depends on pyruvate as a cofactor. Is synthesized initially as an inactive proenzyme, which is activated by self-cleavage at a specific serine bond to produce a beta-subunit with a hydroxyl group at its C-terminus and an alpha-subunit with a pyruvoyl group at its N-terminus.

The protein resides in the cytoplasm. It carries out the reaction L-aspartate + H(+) = beta-alanine + CO2. The protein operates within cofactor biosynthesis; (R)-pantothenate biosynthesis; beta-alanine from L-aspartate: step 1/1. Its function is as follows. Catalyzes the pyruvoyl-dependent decarboxylation of aspartate to produce beta-alanine. The protein is Aspartate 1-decarboxylase of Corynebacterium efficiens (strain DSM 44549 / YS-314 / AJ 12310 / JCM 11189 / NBRC 100395).